The chain runs to 871 residues: Dual O-methyltransferase/FAD-dependent monooxygenase CTB3 (871 aa).

The segment at 1–429 is O-methyltransferase; that stretch reads MMQFQRDLEA…GLLTVRSAGQ (429 aa). Asp-279 serves as a coordination point for S-adenosyl-L-methionine. The active-site Proton acceptor is His-331. An FAD-dependent monooxygenase region spans residues 430 to 871; the sequence is TALSGTNTLT…NLVDCSEFVF (442 aa). Residues Glu-485, Arg-569, and Ala-806 each coordinate FAD.

This sequence in the C-terminal section; belongs to the paxM FAD-dependent monooxygenase family. The protein in the N-terminal section; belongs to the class I-like SAM-binding methyltransferase superfamily. Cation-independent O-methyltransferase family. COMT subfamily.

It catalyses the reaction nor-toralactone + S-adenosyl-L-methionine = toralactone + S-adenosyl-L-homocysteine + H(+). The catalysed reaction is toralactone + NADH + O2 + H(+) = 1-(3,4,5-trihydroxy-7-methoxynaphthalen-2-yl)propan-2-one + CO2 + NAD(+). It functions in the pathway mycotoxin biosynthesis. Dual O-methyltransferase/FAD-dependent monooxygenase; part of the gene cluster that mediates the biosynthesis of cercosporin, a light-activated, non-host-selective toxin. The perylenequinone chromophore of cercosporin absorbs light energy to attain an electronically-activated triplet state and produces active oxygen species such as the hydroxyl radical, superoxide, hydrogen peroxide or singlet oxygen upon reaction with oxygen molecules. These reactive oxygen species cause damage to various cellular components including lipids, proteins and nucleic acids. The first step of cercosporin biosynthesis is performed by the polyketide synthase CTB1 which catalyzes the formation of nor-toralactone. The starter unit acyltransferase (SAT) domain of CTB1 initiates polyketide extension by the selective utilization of acetyl-CoA, which is elongated to the heptaketide in the beta-ketoacyl synthase (KS) domain by successive condensations with six malonyl units introduced by the malonyl acyltransferase (MAT) domain. The product template (PT) domain catalyzes C4-C9 and C2-C11 aldol cyclizations and dehydrations to a trihydroxynaphthalene, which is thought to be delivered to the thioesterase (TE) domain for product release. The bifunctional enzyme CTB3 then methylates nor-toralactone to toralactone before conducting an unusual oxidative aromatic ring opening. The O-methyltransferase CTB2 further methylates the nascent OH-6 of the CBT3 product, blocking further oxidation at this site before the reductase CTB6 reduces the 2-oxopropyl ketone at position C7, giving naphthalene. The FAD-dependent monooxygenase CTB5 in concert with the multicopper oxidase CTB12 are responsible for homodimerization of naphthalene with CTB7 installing the dioxepine moiety, finally producing cercosporin. The fasciclin domain-containing protein CTB11 might act with CTB5 and CTB12 whereas the roles of CTB9 and CTB10 have still to be elucidated. The sequence is that of Dual O-methyltransferase/FAD-dependent monooxygenase CTB3 from Cercospora nicotianae (Barn spot disease fungus).